We begin with the raw amino-acid sequence, 431 residues long: UPF0597 protein BVU_2091 (431 aa).

The protein belongs to the UPF0597 family.

In Phocaeicola vulgatus (strain ATCC 8482 / DSM 1447 / JCM 5826 / CCUG 4940 / NBRC 14291 / NCTC 11154) (Bacteroides vulgatus), this protein is UPF0597 protein BVU_2091.